Consider the following 161-residue polypeptide: Disulfide bond formation protein B (161 aa).

The Cytoplasmic segment spans residues 1-8 (MQANSRAY). Residues 9-25 (FLLIALVSFGLVGVALY) form a helical membrane-spanning segment. The Periplasmic segment spans residues 26 to 43 (LQFEKGYQPCPLCVMQRF). An intrachain disulfide couples C35 to C38. Residues 44–58 (AFIGIGIFSLLAAVA) traverse the membrane as a helical segment. Topologically, residues 59 to 63 (QNTRS) are cytoplasmic. Residues 64-81 (LWQGLGMLSGIAGIAVAV) traverse the membrane as a helical segment. Residues 82–136 (YHVSLLLNPKASCGIDPLENWVNALPTAKALPQVFYADGLCTAPLPPVLGLSVPA) lie on the Periplasmic side of the membrane. C94 and C122 are disulfide-bonded. Residues 137 to 155 (WSLIWLFILTLTLAVGLIR) traverse the membrane as a helical segment. The Cytoplasmic portion of the chain corresponds to 156 to 161 (REKNFR).

This sequence belongs to the DsbB family.

It is found in the cell inner membrane. Its function is as follows. Required for disulfide bond formation in some periplasmic proteins. Acts by oxidizing the DsbA protein. The sequence is that of Disulfide bond formation protein B from Cupriavidus necator (strain ATCC 17699 / DSM 428 / KCTC 22496 / NCIMB 10442 / H16 / Stanier 337) (Ralstonia eutropha).